A 408-amino-acid chain; its full sequence is Argininosuccinate synthase (408 aa).

ATP-binding positions include 9-17 (AYSGGLDTS) and A36. Residues Y87 and S92 each contribute to the L-citrulline site. G117 serves as a coordination point for ATP. Positions 119, 123, and 124 each coordinate L-aspartate. N123 provides a ligand contact to L-citrulline. Residues R127, S176, S185, E261, and Y273 each coordinate L-citrulline.

The protein belongs to the argininosuccinate synthase family. Type 1 subfamily. Homotetramer.

The protein localises to the cytoplasm. It catalyses the reaction L-citrulline + L-aspartate + ATP = 2-(N(omega)-L-arginino)succinate + AMP + diphosphate + H(+). The protein operates within amino-acid biosynthesis; L-arginine biosynthesis; L-arginine from L-ornithine and carbamoyl phosphate: step 2/3. This chain is Argininosuccinate synthase, found in Deinococcus deserti (strain DSM 17065 / CIP 109153 / LMG 22923 / VCD115).